The following is a 381-amino-acid chain: Sulfate adenylyltransferase (381 aa).

It belongs to the sulfate adenylyltransferase family.

The catalysed reaction is sulfate + ATP + H(+) = adenosine 5'-phosphosulfate + diphosphate. Its pathway is sulfur metabolism; hydrogen sulfide biosynthesis; sulfite from sulfate: step 1/3. In Carboxydothermus hydrogenoformans (strain ATCC BAA-161 / DSM 6008 / Z-2901), this protein is Sulfate adenylyltransferase.